The chain runs to 842 residues: Glucans biosynthesis glucosyltransferase H (842 aa).

Helical transmembrane passes span 141–161 (LLLLTLAQTVVATWYMKTILP), 194–214 (ILLLFAVLFCWVSAGFWTALM), 513–533 (VFLTGVMSYLSAPLWFMFLAL), 570–590 (LFASTMILLFLPKLLSIILIW), 615–635 (VLLAPVRMLFHTVFVVSAFLG), and 680–700 (FLFWLAPIVFSLILSPFVSVI).

It belongs to the glycosyltransferase 2 family. OpgH subfamily.

The protein localises to the cell inner membrane. It participates in glycan metabolism; osmoregulated periplasmic glucan (OPG) biosynthesis. Involved in the biosynthesis of osmoregulated periplasmic glucans (OPGs). This Enterobacter sp. (strain 638) protein is Glucans biosynthesis glucosyltransferase H.